Consider the following 167-residue polypeptide: Small ribosomal subunit protein uS3m (167 aa).

The N-terminal 35 residues, 1–35 (MVALYCGGGLRPLMLSWSRDLPCIWRALHTSAVCF), are a transit peptide targeting the mitochondrion.

It belongs to the universal ribosomal protein uS3 family. In terms of assembly, component of the mitochondrial ribosome small subunit (28S) which comprises a 12S rRNA and about 30 distinct proteins.

Its subcellular location is the mitochondrion. The polypeptide is Small ribosomal subunit protein uS3m (MRPS24) (Bos taurus (Bovine)).